A 453-amino-acid polypeptide reads, in one-letter code: UPF0210 protein Pcar_2119 (453 aa).

It belongs to the UPF0210 family. Homodimer.

The protein is UPF0210 protein Pcar_2119 of Syntrophotalea carbinolica (strain DSM 2380 / NBRC 103641 / GraBd1) (Pelobacter carbinolicus).